The following is a 328-amino-acid chain: Probable G-protein coupled receptor 82 (328 aa).

At methionine 1–serine 11 the chain is on the extracellular side. Residues asparagine 3 and asparagine 4 are each glycosylated (N-linked (GlcNAc...) asparagine). A helical membrane pass occupies residues valine 12 to glycine 32. Residues asparagine 33 to alanine 55 are Cytoplasmic-facing. Residues asparagine 56–leucine 76 traverse the membrane as a helical segment. Residues arginine 77–asparagine 92 are Extracellular-facing. Residues phenylalanine 93–isoleucine 115 traverse the membrane as a helical segment. Topologically, residues serine 116–cysteine 156 are cytoplasmic. Residues isoleucine 157–valine 177 traverse the membrane as a helical segment. Topologically, residues glutamate 178–arginine 197 are extracellular. A helical membrane pass occupies residues proline 198 to valine 218. At threonine 219–leucine 251 the chain is on the cytoplasmic side. Residues leucine 252–phenylalanine 272 form a helical membrane-spanning segment. The Extracellular segment spans residues tyrosine 273–serine 328.

The protein belongs to the G-protein coupled receptor 1 family.

Its subcellular location is the cell membrane. Orphan receptor. The protein is Probable G-protein coupled receptor 82 (Gpr82) of Mus musculus (Mouse).